The primary structure comprises 275 residues: HUWE1-associated protein modifying stress responses 1 (275 aa).

Positions 32 to 44 are enriched in acidic residues; it reads AEQDEQLPPELQE. Residues 32 to 51 form a disordered region; it reads AEQDEQLPPELQEEAAAAAQ. The HUWE1-binding and HAPSTR1 oligomerization (HBO) domain stretch occupies residues 80 to 152; the sequence is QQPGLSLWVP…LISFLCGKVP (73 aa). Disordered stretches follow at residues 155–181, 204–227, and 250–275; these read RNSRAPPRLTVVSPNRATSTETSSSVE, SVRSSTPGSPTHVSSGSNASRRRN, and GTRKRTSAQCGDVITDSPTHKRNRMI. The residue at position 167 (S167) is a Phosphoserine. Positions 172 to 181 are enriched in low complexity; that stretch reads TSTETSSSVE. Residues 204–216 show a composition bias toward polar residues; that stretch reads SVRSSTPGSPTHV. A Phosphoserine modification is found at S212.

It belongs to the HAPSTR1 family. In terms of assembly, homooligomer. Heterooligomer with HAPSTR2; the interaction is direct and stabilizes HAPSTR1. Interacts with HUWE1. Post-translationally, ubiquitinated by HUWE1. Promotes HAPSTR1 degradation through polyubiquitination.

The protein resides in the nucleus. The protein localises to the cytoplasm. Acts as a central player within a network of stress response pathways promoting cellular adaptability. The E3 ligase HUWE1 assists HAPSTR1 in controlling stress signaling and in turn, HUWE1 feeds back to promote the degradation of HAPSTR1. HAPSTR1 represents a central coordination mechanism for stress response programs. Functions as a negative regulator of TP53/P53 in the cellular response to telomere erosion and probably also DNA damage. May attenuate p53/TP53 activation through the E3 ubiquitin ligase HUWE1. In Homo sapiens (Human), this protein is HUWE1-associated protein modifying stress responses 1.